The sequence spans 102 residues: Co-chaperonin GroES (102 aa).

The protein belongs to the GroES chaperonin family. Heptamer of 7 subunits arranged in a ring. Interacts with the chaperonin GroEL.

The protein localises to the cytoplasm. Together with the chaperonin GroEL, plays an essential role in assisting protein folding. The GroEL-GroES system forms a nano-cage that allows encapsulation of the non-native substrate proteins and provides a physical environment optimized to promote and accelerate protein folding. GroES binds to the apical surface of the GroEL ring, thereby capping the opening of the GroEL channel. The chain is Co-chaperonin GroES from Streptomyces avermitilis (strain ATCC 31267 / DSM 46492 / JCM 5070 / NBRC 14893 / NCIMB 12804 / NRRL 8165 / MA-4680).